Here is a 251-residue protein sequence, read N- to C-terminus: MKPVLSLLFKLGKKKQTLEKAVESIQKGNKDLQNELIQQYKPFIAKTVSSVCKRYIDEKDDEFSIGLIAFNEAIEKYSPEKGNSLLAFAELIIKRKVIDYIRKEARSAQNINIDLQEGDDQESSQSLIEAELSIDEYRRQIEQEQRREEILYFQKQLKDYGLSFKELLENSPKHTDARQNAIKVAMTLVEHEELAAILYTKKQLPVKQLEQLVSVSRKTIERNRKYIIAMCIIITGDYIYLKDYLKGVLHS.

The short motif at 61 to 74 (DEFSIGLIAFNEAI) is the Polymerase core binding element. A DNA-binding region (H-T-H motif) is located at residues 206–225 (VKQLEQLVSVSRKTIERNRK).

Belongs to the sigma-70 factor family. SigI subfamily. As to quaternary structure, interacts with RsgI.

Its subcellular location is the cytoplasm. Negatively regulated by the anti-sigma-I factor RsgI. Upon exposure to heat, SigI is released from RsgI and activated. Transient heat activation of SigI may depend upon DnaK chaperone. In terms of biological role, sigma factors are initiation factors that promote the attachment of RNA polymerase to specific initiation sites and are then released. This sigma factor is involved in regulation of cell wall metabolism in response to heat stress. Acts by regulating the expression of genes such as bcrC, mreBH and lytE. Also plays a role in survival at low temperatures. This chain is RNA polymerase sigma factor SigI, found in Bacillus subtilis (strain 168).